Here is a 348-residue protein sequence, read N- to C-terminus: Heat-inducible transcription repressor HrcA (348 aa).

It belongs to the HrcA family.

Functionally, negative regulator of class I heat shock genes (grpE-dnaK-dnaJ and groELS operons). Prevents heat-shock induction of these operons. The protein is Heat-inducible transcription repressor HrcA of Chlorobium chlorochromatii (strain CaD3).